Here is a 132-residue protein sequence, read N- to C-terminus: D-ribose pyranase (132 aa).

His20 acts as the Proton donor in catalysis. Residues Asp28, His99, and 121–123 (YSN) each bind substrate.

This sequence belongs to the RbsD / FucU family. RbsD subfamily. In terms of assembly, homodecamer.

It is found in the cytoplasm. The catalysed reaction is beta-D-ribopyranose = beta-D-ribofuranose. It functions in the pathway carbohydrate metabolism; D-ribose degradation; D-ribose 5-phosphate from beta-D-ribopyranose: step 1/2. Its function is as follows. Catalyzes the interconversion of beta-pyran and beta-furan forms of D-ribose. In Pseudomonas putida (strain W619), this protein is D-ribose pyranase.